The primary structure comprises 692 residues: Elongation factor G (692 aa).

Positions 8–283 (KNTRNIGIMA…AVVDYLPSPV (276 aa)) constitute a tr-type G domain. Residues 17–24 (AHIDAGKT), 81–85 (DTPGH), and 135–138 (NKMD) each bind GTP.

It belongs to the TRAFAC class translation factor GTPase superfamily. Classic translation factor GTPase family. EF-G/EF-2 subfamily.

The protein resides in the cytoplasm. Its function is as follows. Catalyzes the GTP-dependent ribosomal translocation step during translation elongation. During this step, the ribosome changes from the pre-translocational (PRE) to the post-translocational (POST) state as the newly formed A-site-bound peptidyl-tRNA and P-site-bound deacylated tRNA move to the P and E sites, respectively. Catalyzes the coordinated movement of the two tRNA molecules, the mRNA and conformational changes in the ribosome. The chain is Elongation factor G from Exiguobacterium sp. (strain ATCC BAA-1283 / AT1b).